We begin with the raw amino-acid sequence, 67 residues long: uncharacterized protein (67 aa).

The next 2 membrane-spanning stretches (helical) occupy residues 8-28 (MWFALGSMGLMFLAVASIYLS) and 41-61 (ISSFAYMCMLISGIIVFVVVF).

The protein localises to the cell membrane. This is an uncharacterized protein from Bacillus subtilis (strain 168).